A 109-amino-acid polypeptide reads, in one-letter code: Elongin-C (109 aa).

This sequence belongs to the SKP1 family.

It localises to the nucleus. Functionally, SIII, also known as elongin, is a general transcription elongation factor that increases the RNA polymerase II transcription elongation past template-encoded arresting sites. Subunit A is transcriptionally active and its transcription activity is strongly enhanced by binding to the dimeric complex of the SIII regulatory subunits B and C (elongin BC complex). The elongin BC complex seems to be involved as an adapter protein in the proteasomal degradation of target proteins via different E3 ubiquitin ligase complexes. This is Elongin-C (tceb1) from Dictyostelium discoideum (Social amoeba).